The primary structure comprises 110 residues: MIKSYLLKTGEELREHGDVPAEYRELFSILIENEFKNAVLILNGEALYFESNSVSGLVEVDRKHIGAAKILLRRVAKEAKKVDLSSIEEAFEFAEQLEKADLDGIAKFLR.

This is an uncharacterized protein from Archaeoglobus fulgidus (strain ATCC 49558 / DSM 4304 / JCM 9628 / NBRC 100126 / VC-16).